We begin with the raw amino-acid sequence, 100 residues long: Urease subunit gamma (100 aa).

It belongs to the urease gamma subunit family. In terms of assembly, heterotrimer of UreA (gamma), UreB (beta) and UreC (alpha) subunits. Three heterotrimers associate to form the active enzyme.

The protein resides in the cytoplasm. The catalysed reaction is urea + 2 H2O + H(+) = hydrogencarbonate + 2 NH4(+). Its pathway is nitrogen metabolism; urea degradation; CO(2) and NH(3) from urea (urease route): step 1/1. This chain is Urease subunit gamma, found in Flavobacterium johnsoniae (strain ATCC 17061 / DSM 2064 / JCM 8514 / BCRC 14874 / CCUG 350202 / NBRC 14942 / NCIMB 11054 / UW101) (Cytophaga johnsonae).